Here is a 349-residue protein sequence, read N- to C-terminus: Fructose-1,6-bisphosphatase class 1 (349 aa).

Positions 91, 110, 112, and 113 each coordinate Mg(2+). Substrate-binding positions include 113–116 (DGSS) and asparagine 205. Glutamate 277 is a binding site for Mg(2+).

It belongs to the FBPase class 1 family. In terms of assembly, homotetramer. Requires Mg(2+) as cofactor.

Its subcellular location is the cytoplasm. The catalysed reaction is beta-D-fructose 1,6-bisphosphate + H2O = beta-D-fructose 6-phosphate + phosphate. The protein operates within carbohydrate biosynthesis; gluconeogenesis. This Rhizobium meliloti (strain 1021) (Ensifer meliloti) protein is Fructose-1,6-bisphosphatase class 1.